The primary structure comprises 267 residues: Putative N-acetylmuramoyl-L-alanine amidase RC0497 (267 aa).

Residues 1-25 are disordered; that stretch reads MSKSKAIENNGISNTNSPNGKYMAP. The span at 10–19 shows a compositional bias: polar residues; that stretch reads NGISNTNSPN. Positions 33–141 constitute an N-acetylmuramoyl-L-alanine amidase domain; the sequence is TCVVITYSVS…NLDLKHDLVG (109 aa).

It belongs to the N-acetylmuramoyl-L-alanine amidase 2 family.

Its subcellular location is the secreted. The enzyme catalyses Hydrolyzes the link between N-acetylmuramoyl residues and L-amino acid residues in certain cell-wall glycopeptides.. The protein is Putative N-acetylmuramoyl-L-alanine amidase RC0497 of Rickettsia conorii (strain ATCC VR-613 / Malish 7).